Here is a 198-residue protein sequence, read N- to C-terminus: Crinkler effector protein BLC01 (198 aa).

A signal peptide spans 1-15 (MMVKLICAIVDIAGA). The segment at 16-55 (AFPIDIDTNELVGDFKKVIKAENSRTIACDANDLRLFLAK) is LQLFLAK domain. Residues 56 to 113 (TDGRWLTEFEVQNGVADISVFEELDVVGAPLNMIGLSEETVSSVAITKELVKAKKTPL) are DWL domain. The HVLVXXP motif motif lies at 114-119 (HVLVVP).

The protein belongs to the Crinkler effector family.

The protein localises to the secreted. Its subcellular location is the host cell. Its function is as follows. Secreted effector that elicits necrosis in host plants, a characteristic of plant innate immunity. The sequence is that of Crinkler effector protein BLC01 from Bremia lactucae (Lettuce downy mildew).